A 348-amino-acid polypeptide reads, in one-letter code: Protein pelota homolog (348 aa).

This sequence belongs to the eukaryotic release factor 1 family. Pelota subfamily. Monomer. It depends on a divalent metal cation as a cofactor.

The protein localises to the cytoplasm. May function in recognizing stalled ribosomes, interact with stem-loop structures in stalled mRNA molecules, and effect endonucleolytic cleavage of the mRNA. May play a role in the release non-functional ribosomes and degradation of damaged mRNAs. Has endoribonuclease activity. This is Protein pelota homolog from Methanococcus aeolicus (strain ATCC BAA-1280 / DSM 17508 / OCM 812 / Nankai-3).